Consider the following 297-residue polypeptide: MEINGVEIEDTYAEAFPIKIARVLITAATKRWALVAATEATGFATSVIMCPAEAGIERLASPSETPDGRPGVYVQICTFKYEALEEQLLERIGQCVLTAPTTAVFNGLPEAEKQFNVGFKLKFFADGMESETQIAGRKVYKVPIMEGDFLAEENIGAIAGIAGGNFFIFGDSQMTALTAAEAAVDTIAELEGTITPFPGGIVASGSKSGANKYKFLKATANERFCPSIKDKIENTEIPADVNAVYEIVINGLDEESIKAAMKAGIKAAVTVPGVKKISAGNYGGKLGKYQFKLHELF.

It belongs to the FTR family. As to quaternary structure, homotetramer.

The protein resides in the cytoplasm. The catalysed reaction is N-formylmethanofuran + 5,6,7,8-tetrahydromethanopterin + H(+) = N(5)-formyl-5,6,7,8-tetrahydromethanopterin + methanofuran. The protein operates within one-carbon metabolism; methanogenesis from CO(2); 5,10-methenyl-5,6,7,8-tetrahydromethanopterin from CO(2): step 2/3. Catalyzes the reversible transfer of a formyl group from formylmethanofuran (formyl-MFR) to tetrahydromethanopterin (H(4)MPT) to produce 5-formyl tetrahydromethanopterin (5-formyl-H(4)MPT) and methanofuran (MFR). This Methanosarcina barkeri (strain Fusaro / DSM 804) protein is Formylmethanofuran--tetrahydromethanopterin formyltransferase.